A 1470-amino-acid chain; its full sequence is Guanine nucleotide exchange factor subunit R06F6.8 (1470 aa).

WD repeat units lie at residues 20–58, 68–107, and 472–512; these read STAA…LLCS, ETRG…DEQC, and AYCS…VVGV. Disordered regions lie at residues 673–710, 975–1001, 1017–1045, and 1238–1259; these read QSQN…PMNQ, FFRT…ADSS, RLNK…SKDK, and RSPS…SPSS. The segment covering 689–707 has biased composition (low complexity); it reads SNVSIQSVSTSTTSEPSSP. The span at 983-1001 shows a compositional bias: polar residues; sequence AKTSLSRRPTVSSPSADSS. Basic and acidic residues predominate over residues 1028-1045; the sequence is EQKDAPRKDSIGGSSKDK. The helical transmembrane segment at 1294 to 1314 threads the bilayer; it reads LLLSLFSQTATIDWIFLFCLL. Basic and acidic residues predominate over residues 1385 to 1403; the sequence is SPDNENRKASQKTSADDPK. The tract at residues 1385–1447 is disordered; it reads SPDNENRKAS…SADRAHKSVK (63 aa). Residues 1411-1424 are compositionally biased toward polar residues; sequence SGSSKLNNSFSNPK. The segment covering 1431–1447 has biased composition (basic and acidic residues); the sequence is GRRERSRSADRAHKSVK.

Belongs to the RIC1 family. As to quaternary structure, component of a guanine nucleotide exchange factor (GEF) complex.

The protein localises to the membrane. Its function is as follows. Probable component of a guanine nucleotide exchange factor (GEF) that may be required for efficient fusion of endosome-derived vesicles with the Golgi. This Caenorhabditis elegans protein is Guanine nucleotide exchange factor subunit R06F6.8.